The chain runs to 236 residues: 2-C-methyl-D-erythritol 4-phosphate cytidylyltransferase (236 aa).

Belongs to the IspD/TarI cytidylyltransferase family. IspD subfamily. As to quaternary structure, homodimer.

It catalyses the reaction 2-C-methyl-D-erythritol 4-phosphate + CTP + H(+) = 4-CDP-2-C-methyl-D-erythritol + diphosphate. The protein operates within isoprenoid biosynthesis; isopentenyl diphosphate biosynthesis via DXP pathway; isopentenyl diphosphate from 1-deoxy-D-xylulose 5-phosphate: step 2/6. In terms of biological role, catalyzes the formation of 4-diphosphocytidyl-2-C-methyl-D-erythritol from CTP and 2-C-methyl-D-erythritol 4-phosphate (MEP). This is 2-C-methyl-D-erythritol 4-phosphate cytidylyltransferase from Salmonella heidelberg (strain SL476).